Here is a 560-residue protein sequence, read N- to C-terminus: Arginine--tRNA ligase (560 aa).

The 'HIGH' region signature appears at 135–145; the sequence is ANPTGLLHMGN.

This sequence belongs to the class-I aminoacyl-tRNA synthetase family. Monomer.

Its subcellular location is the cytoplasm. The catalysed reaction is tRNA(Arg) + L-arginine + ATP = L-arginyl-tRNA(Arg) + AMP + diphosphate. This Moorella thermoacetica (strain ATCC 39073 / JCM 9320) protein is Arginine--tRNA ligase.